A 530-amino-acid polypeptide reads, in one-letter code: Chaperone Ric-8A (530 aa).

S435 is subject to Phosphoserine. Residues T440 and T442 each carry the phosphothreonine modification. Residues S501, S522, S523, and S527 each carry the phosphoserine modification.

Belongs to the synembryn family. Interacts with GDP-bound G alpha proteins GNAI1, GNAO1 and GNAQ, and with GNA13 with lower affinity. Does not interact with G-alpha proteins when they are in complex with subunits beta and gamma. Interacts (via C-terminus) with RGS14; the interaction stimulates the dissociation of the complex between RGS14 and the active GTP-bound form of GNAI1. Interacts with NCS1; interaction is favored in the absence of Ca(2+) and myristoylation of NCS1 is not required. Phosphorylated at Ser-435 and Thr-440 by CK2, stabilizing its interface with G alpha proteins.

The protein localises to the cytoplasm. Its subcellular location is the cell cortex. In terms of biological role, chaperone that specifically binds and folds nascent G alpha proteins prior to G protein heterotrimer formation, promoting their stability and activity: folds GNAI1, GNAO1, GNA13 and GNAQ. Does not fold G(s) G-alpha proteins GNAS nor GNAL. Also acts as a guanine nucleotide exchange factor (GEF) for G alpha proteins by stimulating exchange of bound GDP for free GTP. Involved in regulation of microtubule pulling forces during mitotic movement of chromosomes by stimulating G(i)-alpha protein (GNAI1), possibly leading to release G(i)-alpha-GTP and NuMA proteins from the NuMA-GPSM2-G(i)-alpha-GDP complex. Also acts as an activator for G(q)-alpha (GNAQ) protein by enhancing the G(q)-coupled receptor-mediated ERK activation. The chain is Chaperone Ric-8A (RIC8A) from Bos taurus (Bovine).